The primary structure comprises 423 residues: Endoplasmic reticulum junction formation protein lunapark (423 aa).

Topologically, residues 1–45 are cytoplasmic; sequence MGALLAKWRAKPSTVEVLEKMEKDIQSLEEFRDKNQKLRKIWVAR. A coiled-coil region spans residues 16-40; that stretch reads EVLEKMEKDIQSLEEFRDKNQKLRK. The chain crosses the membrane as a helical span at residues 46–66; that stretch reads LFFYSTILYILTSLTVYLWYL. Over 67–77 the chain is Lumenal; sequence PDGMTARLLTM. Residues 78–98 form a helical membrane-spanning segment; sequence LLFLSFPVLIWFVRTLLILWF. At 99–423 the chain is on the cytoplasmic side; that stretch reads SRRTERNNDA…ETEESFMETE (325 aa). Residues 101–128 adopt a coiled-coil conformation; sequence RTERNNDALELLKTEKKKILEEVMEKET. Positions 147–169 are disordered; sequence KELELPVPGPPITPRPGQDLRQR. The residue at position 159 (T159) is a Phosphothreonine. S177, S179, and S188 each carry phosphoserine. T198 is modified (phosphothreonine). Positions 200–247 are disordered; the sequence is SLQRDTSAPGGPPERSVQPTPQSNILQRRPGSPATTVSGMAIHPPGPP. Residues S206 and S215 each carry the phosphoserine modification. Over residues 216 to 225 the composition is skewed to polar residues; the sequence is VQPTPQSNIL. A Phosphothreonine modification is found at T219. S222 and S231 each carry phosphoserine. The segment at 280–305 adopts a C4-type; plays a role in ER morphology zinc-finger fold; the sequence is CQQCFSHNGMALKEEFEYVAFRCAYC. The interval 318–423 is disordered; the sequence is APRLQEINFD…ETEESFMETE (106 aa). Residues 334-343 are compositionally biased toward polar residues; it reads DSQGSVSSVQ. 2 stretches are compositionally biased toward acidic residues: residues 370–391 and 414–423; these read QAIEEDSTCSEQQWEEAPDDSE and ETEESFMETE.

This sequence belongs to the lunapark family. As to quaternary structure, homodimer; homodimerization requires the C4-type zinc finger motif and decreases during mitosis in a phosphorylation-dependent manner. Phosphorylated. Phosphorylation at Thr-159 occurs during interphase. Phosphorylation at Ser-177, Ser-179, Ser-188, Thr-198, Ser-206, Ser-215, Thr-219, Ser-222 and Ser-231 occurs during mitosis; these phosphorylations reduce both its homodimerization and the ER three-way tubular junction formation.

It is found in the endoplasmic reticulum membrane. Its function is as follows. Endoplasmic reticulum (ER)-shaping membrane protein that plays a role in determining ER morphology. Involved in the stabilization of nascent three-way ER tubular junctions within the ER network. May also play a role as a curvature-stabilizing protein within three-way ER tubular junction network. This is Endoplasmic reticulum junction formation protein lunapark (lnpk) from Xenopus tropicalis (Western clawed frog).